We begin with the raw amino-acid sequence, 285 residues long: Transcription factor E2F6 (285 aa).

K9 participates in a covalent cross-link: Glycyl lysine isopeptide (Lys-Gly) (interchain with G-Cter in SUMO2). The DNA-binding element occupies 50–129 (YVSMRKALKV…SKNHIRWIGS (80 aa)). A DEF box motif is present at residues 95–129 (KLGVRKRRVYDITNVLDGIDLVEKKSKNHIRWIGS). Residues 130-222 (DLSNFGAVPQ…PAPKEDSITV (93 aa)) form a dimerization region. Positions 143–164 (LQEELSDLSAMEDALDELIKDC) are leucine-zipper. Residues 173-285 (DDKENERLAY…QSEEVLEVSN (113 aa)) are transcription repression. Positions 240–285 (QGSHSSNKTSDNVGTSSSKSKPLEHPQPEKEENPPQQSEEVLEVSN) are disordered. Polar residues predominate over residues 241 to 259 (GSHSSNKTSDNVGTSSSKS). The span at 260 to 272 (KPLEHPQPEKEEN) shows a compositional bias: basic and acidic residues.

It belongs to the E2F/DP family. Forms heterodimers with DP family members TFDP1 or TFDP2. Component of the DRTF1/E2F transcription factor complex. Part of the E2F6.com-1 complex in G0 phase composed of E2F6, MGA, MAX, TFDP1, CBX3, BAT8, EUHMTASE1, RING1, RNF2, MBLR, L3MBTL2 and YAF2. Component of some MLL1/MLL complex, at least composed of the core components KMT2A/MLL1, ASH2L, HCFC1/HCF1, WDR5 and RBBP5, as well as the facultative components BACC1, CHD8, E2F6, HSP70, INO80C, KANSL1, LAS1L, MAX, MCRS1, MGA, KAT8/MOF, PELP1, PHF20, PRP31, RING2, RUVB1/TIP49A, RUVB2/TIP49B, SENP3, TAF1, TAF4, TAF6, TAF7, TAF9 and TEX10.

It localises to the nucleus. Inhibitor of E2F-dependent transcription. Binds DNA cooperatively with DP proteins through the E2 recognition site, 5'-TTTC[CG]CGC-3'. Has a preference for the 5'-TTTCCCGC-3' E2F recognition site. E2F6 lacks the transcriptional activation and pocket protein binding domains. Appears to regulate a subset of E2F-dependent genes whose products are required for entry into the cell cycle but not for normal cell cycle progression. Represses expression of some meiosis-specific genes, including SLC25A31/ANT4. May silence expression via the recruitment of a chromatin remodeling complex containing histone H3-K9 methyltransferase activity. Overexpression delays the exit of cells from the S-phase. The sequence is that of Transcription factor E2F6 from Bos taurus (Bovine).